The primary structure comprises 134 residues: Thionin-2.1 (134 aa).

The N-terminal stretch at 1–24 (MKGRILILSLLIMSLVMAQVQVEA) is a signal peptide. 3 disulfides stabilise this stretch: cysteine 27/cysteine 61, cysteine 28/cysteine 55, and cysteine 40/cysteine 49. A propeptide spans 68-134 (AILENSADAT…VVPPGPPKLL (67 aa)) (acidic domain).

It belongs to the plant thionin (TC 1.C.44) family. In terms of tissue distribution, detected in rosette leaves and at a very high level in flowers and in siliques.

Its subcellular location is the secreted. Seems to function as a defense factor. Thionins are small plant proteins which are toxic to animal cells. They seem to exert their toxic effect at the level of the cell membrane. Their precise function is not known. This chain is Thionin-2.1 (THI2.1), found in Arabidopsis thaliana (Mouse-ear cress).